The sequence spans 420 residues: Sulfate adenylyltransferase (420 aa).

This sequence belongs to the sulfate adenylyltransferase family.

It catalyses the reaction sulfate + ATP + H(+) = adenosine 5'-phosphosulfate + diphosphate. The protein operates within sulfur metabolism; hydrogen sulfide biosynthesis; sulfite from sulfate: step 1/3. This Desulforudis audaxviator (strain MP104C) protein is Sulfate adenylyltransferase.